We begin with the raw amino-acid sequence, 215 residues long: Glutathione S-transferase-like protein (215 aa).

A GST N-terminal domain is found at 1–76 (MPNARILKIQ…YVAASGPAAP (76 aa)). In terms of domain architecture, GST C-terminal spans 82–215 (NVAEQAAVRQ…LVAVRKEASV (134 aa)).

The protein belongs to the GST superfamily.

The protein is Glutathione S-transferase-like protein of Aspergillus aculeatus (strain ATCC 16872 / CBS 172.66 / WB 5094).